Reading from the N-terminus, the 158-residue chain is 6,7-dimethyl-8-ribityllumazine synthase (158 aa).

Residues F24, A58 to E60, and A82 to I84 contribute to the 5-amino-6-(D-ribitylamino)uracil site. G87–T88 lines the (2S)-2-hydroxy-3-oxobutyl phosphate pocket. Catalysis depends on H90, which acts as the Proton donor. F115 serves as a coordination point for 5-amino-6-(D-ribitylamino)uracil. (2S)-2-hydroxy-3-oxobutyl phosphate is bound at residue R129.

Belongs to the DMRL synthase family. As to quaternary structure, forms an icosahedral capsid composed of 60 subunits, arranged as a dodecamer of pentamers.

The enzyme catalyses (2S)-2-hydroxy-3-oxobutyl phosphate + 5-amino-6-(D-ribitylamino)uracil = 6,7-dimethyl-8-(1-D-ribityl)lumazine + phosphate + 2 H2O + H(+). It participates in cofactor biosynthesis; riboflavin biosynthesis; riboflavin from 2-hydroxy-3-oxobutyl phosphate and 5-amino-6-(D-ribitylamino)uracil: step 1/2. Catalyzes the formation of 6,7-dimethyl-8-ribityllumazine by condensation of 5-amino-6-(D-ribitylamino)uracil with 3,4-dihydroxy-2-butanone 4-phosphate. This is the penultimate step in the biosynthesis of riboflavin. In Pseudomonas paraeruginosa (strain DSM 24068 / PA7) (Pseudomonas aeruginosa (strain PA7)), this protein is 6,7-dimethyl-8-ribityllumazine synthase.